A 153-amino-acid chain; its full sequence is Jacalin-related lectin Calsepa (153 aa).

Alanine 2 carries the post-translational modification N-acetylalanine. Residues 6–152 (DTISGPWGNN…VDAIGTYNRH (147 aa)) enclose the Jacalin-type lectin domain. N-glycan binding regions lie at residues 17–18 (GN), 95–96 (DN), and 140–144 (GYYVD).

It belongs to the jacalin lectin family. As to quaternary structure, homodimer. Post-translationally, not glycosylated. As to expression, rhizome (at protein level). Detected in the cortex and the pith of rhizome. Not detected in vascular tissues, pericycle, endodermis or rhizodermis.

Its subcellular location is the cytoplasm. Hemagglutinating activity is most inhibited by methyl alpha-mannopyranoside. This activity is inhibited to a less extent (about a third of the inhibition of that of methyl alpha-mannopyranoside) by methyl alpha-glucoside, other alpha-glucosides, such as maltose, isomaltose, panose or palatinose, and alpha-glucosides modified at the second position, such as methyl 2-deoxy-alpha-arabinoglucopyranoside or methyl 2-acetamido-2-deoxy alpha-glucopyranoside. Mildly inhibited by free monosaccharides, with glucose presenting at least 20-fold less inhibitory effect on hemagglutinating activity than mannose. Glycoproteins are somewhat inhibitory, the best being asialothyroglobulin and ovomucoid. Not inhibited by isomaltitol, sucrose or trehalose. Functionally, mannose-binding lectin. Preferentially binds mannose at concentrations ranging between 5 and 25 mM, but also binds glucose. Has a marked preference for methylated sugar derivatives, such as alpha-MeMan and alpha-MeGlc, at concentration down to 5 mM. Binds to N-glycans, but not to glycolipid-type or other type of glycans. Binds N-linked high-mannose-type glycans. Has a preference for smaller (Man(2)-Man(6)) high-mannose-type glycans to larger (Man(7)-Man(9)) ones. Recognizes both alpha1-6 extended and alpha1-3 extended monoantennary glycans. The addition of alpha1-2Man to the Man-alpha1-3Man-beta branch results in a significant loss of affinity, but beta1-2GlcNAc has some affinity. Has less affinity for biantennary glycans. However, affinity is significant for the biantennary complex-type N-glycans with bisecting GlcNAc. No affinity is observed for tri- and tetra-antennary glycans. Binds bisected glycans of the mouse brain. Selectively binds to bisecting N-glycans which are in back-fold conformation, and does not favor a glycan with an extend conformation. Has hemagglutinating activity against rabbit erythrocytes at 0.3 ug/ml and against trypsin-treated human erythrocytes at 5 ug/ml. Has mitogenic activity in murine cells. The polypeptide is Jacalin-related lectin Calsepa (Calystegia sepium (Hedge bindweed)).